We begin with the raw amino-acid sequence, 215 residues long: Ion-translocating oxidoreductase complex subunit G (215 aa).

A helical transmembrane segment spans residues 9–29 (GLLLSGFALICTAAVALVNEA). FMN phosphoryl threonine is present on Thr-176.

This sequence belongs to the RnfG family. The complex is composed of six subunits: RnfA, RnfB, RnfC, RnfD, RnfE and RnfG. FMN serves as cofactor.

The protein resides in the cell inner membrane. Functionally, part of a membrane-bound complex that couples electron transfer with translocation of ions across the membrane. The chain is Ion-translocating oxidoreductase complex subunit G from Shewanella amazonensis (strain ATCC BAA-1098 / SB2B).